Consider the following 318-residue polypeptide: 2-keto-3-deoxygluconate permease (318 aa).

A run of 10 helical transmembrane segments spans residues 10–30 (LPGG…TLWP), 42–62 (GLIS…GATI), 82–102 (IAVA…GGVS), 109–129 (LSVL…YAAL), 139–159 (AGAV…LILG), 163–183 (LASF…LGFA), 201–221 (TLVP…TIAH), 224–244 (TSGV…LLLA), 257–277 (VAAS…AGMA), and 289–309 (ALVA…TALY).

This sequence belongs to the KdgT transporter family.

Its subcellular location is the cell inner membrane. It catalyses the reaction 2-dehydro-3-deoxy-D-gluconate(in) + H(+)(in) = 2-dehydro-3-deoxy-D-gluconate(out) + H(+)(out). In terms of biological role, catalyzes the proton-dependent uptake of 2-keto-3-deoxygluconate (KDG) into the cell. The polypeptide is 2-keto-3-deoxygluconate permease (Xanthomonas axonopodis pv. citri (strain 306)).